The primary structure comprises 252 residues: Small ribosomal subunit protein uS3 (252 aa).

The region spanning 38–106 (IRKYIHARLS…EVQINIFEIK (69 aa)) is the KH type-2 domain. The segment at 214–252 (PLAGMDKKQSGTGGGKGGDAPRGKSNFNKGGKPDARKRK) is disordered. The segment covering 224 to 233 (GTGGGKGGDA) has biased composition (gly residues).

The protein belongs to the universal ribosomal protein uS3 family. Part of the 30S ribosomal subunit. Forms a tight complex with proteins S10 and S14.

In terms of biological role, binds the lower part of the 30S subunit head. Binds mRNA in the 70S ribosome, positioning it for translation. The polypeptide is Small ribosomal subunit protein uS3 (Flavobacterium johnsoniae (strain ATCC 17061 / DSM 2064 / JCM 8514 / BCRC 14874 / CCUG 350202 / NBRC 14942 / NCIMB 11054 / UW101) (Cytophaga johnsonae)).